A 491-amino-acid chain; its full sequence is La-related protein 6 (491 aa).

Positions 1–87 are disordered; sequence MAQSGGEARP…REDLEQEWKP (87 aa). Residue alanine 2 is modified to N-acetylalanine. A compositionally biased stretch (acidic residues) spans 24–37; the sequence is EAEDVDELEDEEEG. Phosphoserine occurs at positions 56 and 58. In terms of domain architecture, HTH La-type RNA-binding spans 86–177; it reads KPPDEELIKK…RRTTPVPLFP (92 aa). Residues 184–296 form the RRM domain; that stretch reads KMLLVYDLYL…KAVLIGMKPP (113 aa). Residues 186–193 carry the Nuclear export signal motif; sequence LLVYDLYL. 2 disordered regions span residues 293 to 403 and 423 to 491; these read MKPP…EEGR and SSVT…RACV. Residues 296–302 carry the Nuclear localization signal motif; sequence PKKKPAK. Over residues 332 to 346 the composition is skewed to low complexity; it reads DESSANSSSDPESNP. Composition is skewed to polar residues over residues 359 to 386 and 444 to 453; these read NKLSPSGHQNLFLSPNASPCTSPWSSPL and QEKSPGTSPL. The region spanning 427–485 is the SUZ-C domain; the sequence is PSGSPWVRRRRQAEMGTQEKSPGTSPLLSRKMQTADGLPVGVLRLPRGPDNTRGFHGHE. The segment covering 482–491 has biased composition (basic and acidic residues); sequence HGHERSRACV.

In terms of assembly, interacts (via the HTH domain) with VIM/vimentin. Interacts (via C-terminus) with non-muscle myosin MYH10. Interacts (via C-terminus) with DHX9. As to expression, expressed in numerous tissues.

Its subcellular location is the cytoplasm. The protein resides in the nucleus. Functionally, regulates the coordinated translation of type I collagen alpha-1 and alpha-2 mRNAs, CO1A1 and CO1A2. Stabilizes mRNAs through high-affinity binding of a stem-loop structure in their 5' UTR. This regulation requires VIM and MYH10 filaments, and the helicase DHX9. In Homo sapiens (Human), this protein is La-related protein 6 (LARP6).